The primary structure comprises 390 residues: uncharacterized protein (390 aa).

A run of 2 helical transmembrane segments spans residues 27-47 and 356-376; these read GGLI…MEWI and FGGF…LASF.

Belongs to the ERGIC family.

Its subcellular location is the membrane. This is an uncharacterized protein from Schizosaccharomyces pombe (strain 972 / ATCC 24843) (Fission yeast).